A 300-amino-acid chain; its full sequence is HTH-type transcriptional activator NahR (300 aa).

The HTH lysR-type domain maps to 6–63; the sequence is LDLNLLVVFNQLLVDRRVSITAENLGLTQPAVSNALKRLRTSLQDPLFVRTHQGMEPT. Positions 23 to 42 form a DNA-binding region, H-T-H motif; that stretch reads VSITAENLGLTQPAVSNALK.

The protein belongs to the LysR transcriptional regulatory family.

Its subcellular location is the cytoplasm. Regulates the expression of the naphthalene (nahA-F) and salicylate (nahG-M) metabolism genes. The sequence is that of HTH-type transcriptional activator NahR (nahR) from Pseudomonas putida (Arthrobacter siderocapsulatus).